Reading from the N-terminus, the 160-residue chain is Phosphopantetheine adenylyltransferase (160 aa).

Thr-9 is a binding site for substrate. Residues 9-10 and His-17 contribute to the ATP site; that span reads TF. The substrate site is built by Lys-41, Leu-73, and Arg-87. ATP contacts are provided by residues 88 to 90, Glu-98, and 123 to 129; these read GLR and FSYTSSS.

Belongs to the bacterial CoaD family. In terms of assembly, homohexamer. Mg(2+) is required as a cofactor.

It localises to the cytoplasm. It carries out the reaction (R)-4'-phosphopantetheine + ATP + H(+) = 3'-dephospho-CoA + diphosphate. It functions in the pathway cofactor biosynthesis; coenzyme A biosynthesis; CoA from (R)-pantothenate: step 4/5. Reversibly transfers an adenylyl group from ATP to 4'-phosphopantetheine, yielding dephospho-CoA (dPCoA) and pyrophosphate. In Opitutus terrae (strain DSM 11246 / JCM 15787 / PB90-1), this protein is Phosphopantetheine adenylyltransferase.